The following is a 396-amino-acid chain: Chalcone synthase A (396 aa).

Cys170 is a catalytic residue.

This sequence belongs to the thiolase-like superfamily. Chalcone/stilbene synthases family.

The catalysed reaction is (E)-4-coumaroyl-CoA + 3 malonyl-CoA + 3 H(+) = 2',4,4',6'-tetrahydroxychalcone + 3 CO2 + 4 CoA. It functions in the pathway secondary metabolite biosynthesis; flavonoid biosynthesis. Its function is as follows. The primary product of this enzyme is 4,2',4',6'-tetrahydroxychalcone (also termed naringenin-chalcone or chalcone) which can under specific conditions spontaneously isomerize into naringenin. This is Chalcone synthase A (CHSA) from Ipomoea purpurea (Common morning glory).